The sequence spans 404 residues: METAKDNTARTFMELMRVPVQFYRTIGEDIYAHRSTNPLKSLLFKIYLYAGFINFNLLVIGELVFFYNSIQDFETIRLAIAVAPCIGFSLVADFKQAAMIRGKKTLIMLLDDLENMHPKTLAKQMEYKLPDFEKTMKRVINIFTFLCLAYTTTFSFYPAIKASVKFNFLGYDTFDRNFGFLIWFPFDATRNNLIYWIMYWDIAHGAYLAGIAFLCADLLLVVVITQICMHFNYISMRLEDHPCNSNEDKENIEFLIGIIRYHDKCLKLCEHVNDLYSFSLLLNFLMASMQICFIAFQVTESTVEVIIIYCIFLMTSMVQVFMVCYYGDTLIAASLKVGDAAYNQKWFQCSKSYCTMLKLLIMRSQKPASIRPPTFPPISLVTYMKVISMSYQFFALLRTTYSNN.

Topologically, residues 1-45 are cytoplasmic; sequence METAKDNTARTFMELMRVPVQFYRTIGEDIYAHRSTNPLKSLLFK. The chain crosses the membrane as a helical span at residues 46-66; that stretch reads IYLYAGFINFNLLVIGELVFF. The Extracellular segment spans residues 67–79; sequence YNSIQDFETIRLA. The chain crosses the membrane as a helical span at residues 80–100; the sequence is IAVAPCIGFSLVADFKQAAMI. Topologically, residues 101 to 139 are cytoplasmic; sequence RGKKTLIMLLDDLENMHPKTLAKQMEYKLPDFEKTMKRV. Residues 140–160 form a helical membrane-spanning segment; that stretch reads INIFTFLCLAYTTTFSFYPAI. Over 161-204 the chain is Extracellular; the sequence is KASVKFNFLGYDTFDRNFGFLIWFPFDATRNNLIYWIMYWDIAH. The chain crosses the membrane as a helical span at residues 205-225; the sequence is GAYLAGIAFLCADLLLVVVIT. Residues 226–277 are Cytoplasmic-facing; that stretch reads QICMHFNYISMRLEDHPCNSNEDKENIEFLIGIIRYHDKCLKLCEHVNDLYS. Residues 278–298 traverse the membrane as a helical segment; the sequence is FSLLLNFLMASMQICFIAFQV. The Extracellular segment spans residues 299–304; that stretch reads TESTVE. Residues 305-326 form a helical membrane-spanning segment; the sequence is VIIIYCIFLMTSMVQVFMVCYY. At 327–373 the chain is on the cytoplasmic side; sequence GDTLIAASLKVGDAAYNQKWFQCSKSYCTMLKLLIMRSQKPASIRPP. A helical transmembrane segment spans residues 374-394; the sequence is TFPPISLVTYMKVISMSYQFF. Residues 395–404 are Extracellular-facing; the sequence is ALLRTTYSNN.

The protein belongs to the insect chemoreceptor superfamily. Heteromeric odorant receptor channel (TC 1.A.69) family. Or49a subfamily. Interacts with Orco. Complexes exist early in the endomembrane system in olfactory sensory neurons (OSNs), coupling these complexes to the conserved ciliary trafficking pathway. Expressed in olfactory sensory neurons in the antenna.

Its subcellular location is the cell membrane. Functionally, odorant receptor which mediates acceptance or avoidance behavior, depending on its substrates. The odorant receptor repertoire encodes a large collection of odor stimuli that vary widely in identity, intensity, and duration. May form a complex with Orco to form odorant-sensing units, providing sensitive and prolonged odorant signaling and calcium permeability. This Drosophila melanogaster (Fruit fly) protein is Odorant receptor 67c (Or67c).